Consider the following 106-residue polypeptide: Large ribosomal subunit protein uL24 (106 aa).

It belongs to the universal ribosomal protein uL24 family. As to quaternary structure, part of the 50S ribosomal subunit.

One of two assembly initiator proteins, it binds directly to the 5'-end of the 23S rRNA, where it nucleates assembly of the 50S subunit. Functionally, one of the proteins that surrounds the polypeptide exit tunnel on the outside of the subunit. The polypeptide is Large ribosomal subunit protein uL24 (Desulforudis audaxviator (strain MP104C)).